Consider the following 241-residue polypeptide: MDFISKTIGLRLGYNKTHKLIWSLSKNNPIFIQTNHFLEYIIKNDPFFCGLILIDFQLMQYIVVHKNQLGNFSPLKNNLPNSINLFLKLKIATEIQSNFNSVFILEERLHFLFFKYLNKMKNLKMLNNLKIKVKIKFLNNPILEPQWIFYKLHQDLYKGINIRRALAKISSNVIKKGAEGVKIQIKGRINGVDKATVIVEEKGKMPLQNLSSEINYYSRALKTVYGLLGVKIWVFKGFLLK.

The protein belongs to the universal ribosomal protein uS3 family. Part of the 30S ribosomal subunit.

It is found in the plastid. This chain is Small ribosomal subunit protein uS3c (rps3), found in Helicosporidium sp. subsp. Simulium jonesii (Green alga).